An 810-amino-acid polypeptide reads, in one-letter code: Coiled-coil domain-containing protein 15 (810 aa).

Coiled coils occupy residues 65–89 (VVEE…RQVR), 160–189 (DGEN…SFKT), and 638–669 (MDIE…EQQR).

In terms of assembly, interacts with POC5, POC1B, CETN2 and FAM161A.

It localises to the cytoplasm. The protein localises to the cytoskeleton. Its subcellular location is the microtubule organizing center. It is found in the centrosome. The protein resides in the centriole. It localises to the centriolar satellite. Plays an important role in primary cilium assembly, maintenance, and length regulation. Interacts with centriole inner scaffold proteins to promote proper centriole size and integrity and assembly of functional cilia. Required for the recruitment of both the inner scaffold protein POC1B and the distal SFI1/CETN2 complex to centrioles. The sequence is that of Coiled-coil domain-containing protein 15 (Ccdc15) from Mus musculus (Mouse).